The sequence spans 1690 residues: DNA-directed RNA polymerase subunit beta' (1690 aa).

Cysteine 63, cysteine 65, cysteine 78, and cysteine 81 together coordinate Zn(2+). Residues aspartate 753, aspartate 755, and aspartate 757 each coordinate Mg(2+). Zn(2+)-binding residues include cysteine 1107, cysteine 1295, cysteine 1302, and cysteine 1305.

Belongs to the RNA polymerase beta' chain family. In terms of assembly, the RNAP catalytic core consists of 2 alpha, 1 beta, 1 beta' and 1 omega subunit. When a sigma factor is associated with the core the holoenzyme is formed, which can initiate transcription. Mg(2+) serves as cofactor. Zn(2+) is required as a cofactor.

The catalysed reaction is RNA(n) + a ribonucleoside 5'-triphosphate = RNA(n+1) + diphosphate. DNA-dependent RNA polymerase catalyzes the transcription of DNA into RNA using the four ribonucleoside triphosphates as substrates. This Thermotoga sp. (strain RQ2) protein is DNA-directed RNA polymerase subunit beta'.